A 74-amino-acid chain; its full sequence is Serine rich endogenous peptide 16 (74 aa).

The signal sequence occupies residues 1 to 31 (MATKISHLVSLLLSLLLLLLFISSQVGFTEA). The tract at residues 29–74 (TEAKRDERKKMSSPPIPSPLIPSPPIPPPPPRFYVPPSKSRRGKGP) is disordered. The span at 42-62 (PPIPSPLIPSPPIPPPPPRFY) shows a compositional bias: pro residues. An SCOOP motif motif is present at residues 60–74 (RFYVPPSKSRRGKGP). Positions 66 to 68 (SKS) match the SxS motif essential for MIK2 binding motif.

Belongs to the serine rich endogenous peptide (SCOOP) phytocytokine family. In terms of assembly, interacts with MIK2 (via extracellular leucine-rich repeat domain); this interaction triggers the formation of complex between MIK2 and the BAK1/SERK3 and SERK4 coreceptors, and subsequent BAK1 activation by phosphorylation.

It localises to the cell membrane. Its subcellular location is the secreted. It is found in the extracellular space. The protein localises to the apoplast. In terms of biological role, brassicaceae-specific phytocytokine (plant endogenous peptide released into the apoplast) perceived by MIK2 in a BAK1/SERK3 and SERK4 coreceptors-dependent manner, that modulates various physiological and antimicrobial processes including growth prevention and reactive oxygen species (ROS) response regulation. The protein is Serine rich endogenous peptide 16 of Arabidopsis thaliana (Mouse-ear cress).